The chain runs to 296 residues: NAD kinase (296 aa).

Catalysis depends on D74, which acts as the Proton acceptor. NAD(+) contacts are provided by residues 74–75 (DG), 148–149 (ND), R176, D178, and 189–194 (TAYALS).

It belongs to the NAD kinase family. The cofactor is a divalent metal cation.

The protein localises to the cytoplasm. The enzyme catalyses NAD(+) + ATP = ADP + NADP(+) + H(+). Involved in the regulation of the intracellular balance of NAD and NADP, and is a key enzyme in the biosynthesis of NADP. Catalyzes specifically the phosphorylation on 2'-hydroxyl of the adenosine moiety of NAD to yield NADP. In Nitrosomonas eutropha (strain DSM 101675 / C91 / Nm57), this protein is NAD kinase.